The following is a 488-amino-acid chain: Sucrose 6(F)-phosphate phosphorylase (488 aa).

Sucrose 6(F)-phosphate is bound by residues aspartate 49, histidine 87, arginine 195 to aspartate 197, glutamate 238, histidine 295 to aspartate 296, aspartate 342 to glutamine 345, and arginine 399. Aspartate 197 serves as the catalytic Nucleophile. Residue glutamate 238 is the Proton donor/acceptor of the active site.

The protein belongs to the glycosyl hydrolase 13 family. Sucrose phosphorylase subfamily. As to quaternary structure, monomer.

It carries out the reaction sucrose 6(F)-phosphate + phosphate = beta-D-fructose 6-phosphate + alpha-D-glucose 1-phosphate. Catalyzes the reversible phosphorolysis of sucrose 6(F)-phosphate into alpha-D-glucose 1-phosphate (Glc1P) and D-fructose 6-phosphate. May be involved in a new pathway for the degradation of sucrose, which could become phosphorylated on its fructose moiety during uptake via a PTS system. To a lesser extent, can also reversibly act on sucrose in vitro. Is also able to catalyze transglycosylation reactions in vitro. The sequence is that of Sucrose 6(F)-phosphate phosphorylase from Thermoanaerobacterium thermosaccharolyticum (strain ATCC 7956 / DSM 571 / NCIMB 9385 / NCA 3814 / NCTC 13789 / WDCM 00135 / 2032) (Clostridium thermosaccharolyticum).